Reading from the N-terminus, the 439-residue chain is Xylose isomerase (439 aa).

Residues histidine 101 and aspartate 104 contribute to the active site. Residues glutamate 232, glutamate 268, histidine 271, aspartate 296, aspartate 307, aspartate 309, and aspartate 339 each coordinate Mg(2+).

This sequence belongs to the xylose isomerase family. Homotetramer. Requires Mg(2+) as cofactor.

It localises to the cytoplasm. It carries out the reaction alpha-D-xylose = alpha-D-xylulofuranose. This chain is Xylose isomerase (xylA), found in Thermoanaerobacterium saccharolyticum.